A 204-amino-acid polypeptide reads, in one-letter code: Leucyl/phenylalanyl-tRNA--protein transferase (204 aa).

The protein belongs to the L/F-transferase family.

The protein resides in the cytoplasm. It catalyses the reaction N-terminal L-lysyl-[protein] + L-leucyl-tRNA(Leu) = N-terminal L-leucyl-L-lysyl-[protein] + tRNA(Leu) + H(+). The catalysed reaction is N-terminal L-arginyl-[protein] + L-leucyl-tRNA(Leu) = N-terminal L-leucyl-L-arginyl-[protein] + tRNA(Leu) + H(+). It carries out the reaction L-phenylalanyl-tRNA(Phe) + an N-terminal L-alpha-aminoacyl-[protein] = an N-terminal L-phenylalanyl-L-alpha-aminoacyl-[protein] + tRNA(Phe). In terms of biological role, functions in the N-end rule pathway of protein degradation where it conjugates Leu, Phe and, less efficiently, Met from aminoacyl-tRNAs to the N-termini of proteins containing an N-terminal arginine or lysine. The polypeptide is Leucyl/phenylalanyl-tRNA--protein transferase (Rhizobium etli (strain CIAT 652)).